The primary structure comprises 382 residues: ATP phosphoribosyltransferase regulatory subunit (382 aa).

It belongs to the class-II aminoacyl-tRNA synthetase family. HisZ subfamily. Heteromultimer composed of HisG and HisZ subunits.

Its subcellular location is the cytoplasm. It participates in amino-acid biosynthesis; L-histidine biosynthesis; L-histidine from 5-phospho-alpha-D-ribose 1-diphosphate: step 1/9. Functionally, required for the first step of histidine biosynthesis. May allow the feedback regulation of ATP phosphoribosyltransferase activity by histidine. In Burkholderia multivorans (strain ATCC 17616 / 249), this protein is ATP phosphoribosyltransferase regulatory subunit.